An 87-amino-acid polypeptide reads, in one-letter code: Small ribosomal subunit protein uS15c (87 aa).

Positions 1-20 (MNQNLSIRKRNKLKQDSGSP) are disordered.

This sequence belongs to the universal ribosomal protein uS15 family. In terms of assembly, part of the 30S ribosomal subunit.

It is found in the plastid. It localises to the chloroplast. The polypeptide is Small ribosomal subunit protein uS15c (rps15) (Zygnema circumcarinatum (Green alga)).